A 1339-amino-acid chain; its full sequence is Tuberous sclerosis 2 protein homolog (1339 aa).

A Phosphoserine modification is found at serine 1036. The region spanning 1109-1303 (ILANTNPSED…AERLRQLKRL (195 aa)) is the Rap-GAP domain.

As to quaternary structure, interacts with tsc1.

Its subcellular location is the cytoplasm. It is found in the nucleus. Its function is as follows. Together with tsc1, required for uptake of various amino acids from the environment and for proper conjugation. Involved in induction of gene expression of permeases and genes required for meiosis upon nitrogen starvation. May act as a GTPase-activating protein (GAP) for the small GTPase rhb1. The polypeptide is Tuberous sclerosis 2 protein homolog (tsc2) (Schizosaccharomyces pombe (strain 972 / ATCC 24843) (Fission yeast)).